The following is a 154-amino-acid chain: Ribonuclease H (154 aa).

Residues 1–142 (MRKQVEIFTD…CDELARAAAS (142 aa)) enclose the RNase H type-1 domain. Residues Asp-10, Glu-48, Asp-70, and Asp-134 each coordinate Mg(2+).

It belongs to the RNase H family. In terms of assembly, monomer. The cofactor is Mg(2+).

The protein localises to the cytoplasm. It catalyses the reaction Endonucleolytic cleavage to 5'-phosphomonoester.. Endonuclease that specifically degrades the RNA of RNA-DNA hybrids. The polypeptide is Ribonuclease H (Pectobacterium atrosepticum (strain SCRI 1043 / ATCC BAA-672) (Erwinia carotovora subsp. atroseptica)).